A 497-amino-acid chain; its full sequence is Cytochrome P450 71A20 (497 aa).

Residues 3–23 (MILITLCLTTLLALLLKSILK) traverse the membrane as a helical segment. Cys440 provides a ligand contact to heme.

Belongs to the cytochrome P450 family. The cofactor is heme.

The protein localises to the membrane. This Arabidopsis thaliana (Mouse-ear cress) protein is Cytochrome P450 71A20 (CYP71A20).